Reading from the N-terminus, the 176-residue chain is MGSEQNDSTSFTQSQASEPKLCVKGCGFFGSPSNMDLCSKCYRGICAEEAQTAVAKAAVEKSFKPSPPRSLFIAEPPAVVVEPKPEKAAVVVVSAEPSSSAVPEANEPSRPARTNRCLCCNKKVGIMGFKCKCGSTFCGEHRYPETHDCSFDFKEVGRGEIAKANPVVKADKIQRF.

An A20-type zinc finger spans residues Ala-16–Ala-50. The Zn(2+) site is built by Cys-22, Cys-26, Cys-38, Cys-41, Cys-117, Cys-120, Cys-131, Cys-133, Cys-138, His-141, His-147, and Cys-149. The AN1-type zinc finger occupies Pro-111–Gly-157.

In terms of biological role, may be involved in environmental stress response. The polypeptide is Zinc finger A20 and AN1 domain-containing stress-associated protein 9 (SAP9) (Arabidopsis thaliana (Mouse-ear cress)).